Consider the following 372-residue polypeptide: Actin-related protein T3 (372 aa).

It belongs to the actin family. In terms of assembly, interacts with PFN3. As to expression, ubiquitously expressed.

Its subcellular location is the cytoplasm. It is found in the cytoskeleton. It localises to the nucleus. This chain is Actin-related protein T3 (ACTRT3), found in Homo sapiens (Human).